A 397-amino-acid polypeptide reads, in one-letter code: Protein RecA (397 aa).

The tract at residues Met-1–Arg-23 is disordered. Gly-83–Thr-90 contributes to the ATP binding site.

It belongs to the RecA family.

It is found in the cytoplasm. Its function is as follows. Can catalyze the hydrolysis of ATP in the presence of single-stranded DNA, the ATP-dependent uptake of single-stranded DNA by duplex DNA, and the ATP-dependent hybridization of homologous single-stranded DNAs. It interacts with LexA causing its activation and leading to its autocatalytic cleavage. The protein is Protein RecA of Bifidobacterium longum (strain NCC 2705).